Reading from the N-terminus, the 125-residue chain is Large ribosomal subunit protein bL20 (125 aa).

This sequence belongs to the bacterial ribosomal protein bL20 family.

Its function is as follows. Binds directly to 23S ribosomal RNA and is necessary for the in vitro assembly process of the 50S ribosomal subunit. It is not involved in the protein synthesizing functions of that subunit. The polypeptide is Large ribosomal subunit protein bL20 (Thermobifida fusca (strain YX)).